Consider the following 170-residue polypeptide: Type IV pilus assembly protein C (170 aa).

An N-terminal signal peptide occupies residues 1-23 (MKSKLPLILINLSLISSPLGANA). The tract at residues 87-107 (KTVSKPAKSNTPPQQAPVNNS) is disordered. The span at 93-107 (AKSNTPPQQAPVNNS) shows a compositional bias: polar residues. A coiled-coil region spans residues 109–166 (RSILEAELSNERKALTEAQKMLSQARLAKGGNINHQKINALQSNVLDRQQNIQALQRE).

Its subcellular location is the periplasm. Functionally, required for stabilizing type IV pilus (T4p) in extended, nonretracted conformation on the bacterial cell surface. The polypeptide is Type IV pilus assembly protein C (Neisseria gonorrhoeae (strain ATCC 700825 / FA 1090)).